The following is a 3218-amino-acid chain: MKNAIHPENCNGAGTEEEASSAFHAEIDRVLLNNNGNHGDSSNEGGGGNGSGRGGATGSGNIAGLGGSESMWSPGGGKSHDVAQAFANALLLRNMNHVVGKGQPVVQNHRKAYQCKGDTINPMANGEDLRLSKIIRRLINENNPTVSLELCSKLDQAVRTPINMGYMTCSFVWILDNMLTLYKQCPPPVLEECSKTLGLIGFINRKSYPIYEEFIVKNYKSSKRMQKYMIMALRATLSCDTKCELHMYADKIMLLLKDFLENAESADIFIVVSNTLVQFAASYAETFECHFTDVVDIVIGWQLEAGQPTDLKTHCAQVLEQLTPFFSKQIDFSYGLLDQFVEDITTLEEGEPANTAERVGAFVGAFNTLLKCLARMQIFVGMPTCECIVKMAVDHLIKIMPTLHLNTEALVNINELICICLLNNFTGLDPILLEQVLLDQVKRMISLTELQRQSVLYLLLCTVRRLRARLTPSLVHFIFQSNPYMTKVRLRSPGETSYKLLLRTCQETLLIRNVPLLQQAYKYLVDDIDACLEKLLITAPRSKARKASVLLVFHLSALAALAKQTSSIIGMYACKPSILELLLTNCRAHELKFWSKYPAAQQAIFGLLVVHCQANHNFRTNSSLLRDQELSAENTSPTANSFASILRFLDSVLGQAHQLAPQNLRVLLQWIQMLLRECREKIDLLMEQENFRGICRNIAATASKLVPLESAACIQTVLDYGLERLEKYPKLLILYRDTALQQLQMLSTNYHAPYFQIYAQLPLHLTLTGGESSMPGMASRRVSVWQQRISQYSAVRDNVFRDFFDRVQKPEQDSLIHCLRELFVRSCQVAPQDERQMNLSQCTKRCQRLAIAWLQFEAARYCVDQRLRTTVGKPQETFLGFEAIIMRHARLLSGCAKEIERSALDDLSLEELLSMQSNLSLLLGFLDALEKLIYNAAEGSAFALRPPEKQVAAFFRLNNPTCQSWFNRIRIGVVIIAMHVQQPELVIRYAQQILVNSKTQDPTYSQAIVYMAWSLVSCQEADSLRGLRLWARGKSCKSYKWLKYAADQAAGKRESALAGYRTILAEKELQSELEPHTRQFVVSQMMQCLQDLGQWSQLVELKQQQMTRPEDRELNPFLQRSNVEVNALERLLAKSEESCSSMDALGGVFQQLSLWPSNWDESVSSSGLSERASFSSIHMRQRTEDIVLHKLLEDRCVPDQAKNLLDTQWRDSLLNPSFDQRSCKELTLLRHIVQGVSGGQELSLLPVSSGRCQNRSKFISSAILMRCLAWTQLLRQHCAPGSWETLCLDAAAAAREEGNLQLAETLLTQFFGQPIGEIAALFSLEQGVQTDNPEMLRGYSELVKCLHLQQQQSQTHSGDLSSSIDVCAALCLNIQKSNNQPAAGADLLLNLADWIAVRTCNGLTTNQSPVLIQLLDQLPECPLTCDSSQPLAIPQAERMVARLVHSCLQQRPNYAEALIAYGNWCYRWGKKVADSCCVLTQADATAISQALDIPQPLESEKLDELLQALSTEQPPANCVEVCPDAARARDDEAAKNRLRRLTFLADKTPEALDAILQIWRRAIANTYDYYKDAARSYFQYLSFKSGSGPEKPEGEGVVSQRERLHVDDSNLVTTTLRLLRLIVKHASGLQEVLEQGLHTTPIAPWKVIIPQLFSRLNHHEPYVRKSVCDLLCRLAKSRPQLVIFPAVVGANREQQDATAPPATARPTTEDACCYGYLLGELSKQAPEAVQHVKLMVKELRRVCLLWDEYWIHSLAHIYNTYVSRVSALATDFRPDDHEGKNNRFNVWRPQLLADLEALVAVTSRPPETTYERSFRKRFDAPIRLTVDALRHRRYPEAWDKLKQLYHILQSNMIRGSGSTLKMQSISPVLCGIGRMRISMPGLDAHGPDGDQVYIESVESSVCVLPTKTKPKKVAFYGSNGQRYTFLFKGMEDLHLDERIMQFLSISNAIMACRSDAPGNGCYRAHHYSVIPLGPQSGLISWVDGVTPVFALYKKWQQRRSQVAGNAGAGAVANVPRRFTDLFYNKLSPLLAKHNMQVSDPRRQWPISVLLQVLDELSQETPNDLLARELWCQAGNAAEWRQSVRRFVRCMSVMSMIGYVIGLGDRHLDNVLINLGSGDIVHIDYNVCFEKGRTLRIPEKVPFRLTQNLVQAMGITGIEGPFRLGCEYVLKVMRKERETLLTLLEAFVYDPLVDWTTNDDAQALRRSLNAKLQESADGGGAGGLGVGDLKYHKKDKNKGKPLDSDVKRQPFLSKLGMLQKYWSTNKTELMPQLEEMEQEVGNLQAAQAKQVVAEEELVKLNQRSALIAEIKSLGTAIESHSFNTASLRNAVRRGHSEALALLSTERLPDFGRVQCILRSYGQCLQLYHLLDLQGQLVKLQMESNSENAREFSALTEALQLSGLDSMRSQLNELLGRMDMVAQKSSKHLQEYAGVMNFYPEQSHRQNLFVRFHDSFATYIQNGYTADSTTNTNSPSSSIICKADVVGVAEAMEYSWERLGCQLHEASKLYAANQAQALTLGAPTTALLSMIVQSGCSQLLLKASLVRTLDRAGGAFAAYEQVALASHDDGLLHHQLLFIHLVRTMLQGVLVMTKEEDQHLAQLESLLSALSHLKKMFEYDLPANLYRLLLLQPNLGKLSALCHLSASSLAQLFLEATMENGHKPPDQFPVERRFLLTLQPVYDQFLLASTSLDSLVSSMQSMLEDVHDVQTQQIMELGLMRSCHTELNDECFFGLVSEALESSRTCDVREMARPMLGFIHRLQVEKLAGLLPILTRNFYTAVGPQCLPTASCGDPAQADHLCESLFISLQSDGALLQQQAEIALLSQQVDLHTLAASAQYWAYSEALGSQLRCGPHIVSRPKLTAAIGECWLELDQKLTALQQLQAGLESQLSQLQTQRSNWNRNHIDNLLRMEQCNKQRTMSHVALLQKMTDGAGAVARLEQNAIVVGEEGQALVDHLEQWLAAHGQWQASSSRISAVEQSMVELLDPEGAIDHYWLENVQGLLEEQTCKVHREIAAIEGEQQSKHRFICTLLKETLRLLENMPRFHVQSLCSEAQAQGQGKMEYANVQLLSDHLREGQGLMQSLYMRLQELRKDICSDRRVLQPSMLQNWRHQLEMILTLAKQEVNEFFKGLEDFMQHAGETDSYEIFTHAKGSGNVHEQKRNAYGVSVWKKIRMKLEGRDPDSNQRSTVAEQVDYVIREACNPENLAVLYEGWTPWV.

Residues 32–78 (LNNNGNHGDSSNEGGGGNGSGRGGATGSGNIAGLGGSESMWSPGGGK) are disordered. Residues 33 to 43 (NNNGNHGDSSN) are compositionally biased toward low complexity. The segment covering 44–67 (EGGGGNGSGRGGATGSGNIAGLGG) has biased composition (gly residues). Phosphoserine is present on Ser-70. The FAT domain maps to 1289 to 1692 (DAAAAAREEG…IFPAVVGANR (404 aa)). The stretch at 1643–1678 (APWKVIIPQLFSRLNHHEPYVRKSVCDLLCRLAKSR) is one HEAT repeat. Positions 1897-2232 (VESSVCVLPT…LGVGDLKYHK (336 aa)) constitute a PI3K/PI4K catalytic domain. The tract at residues 1903-1909 (VLPTKTK) is G-loop. Positions 2101-2109 (GLGDRHLDN) are catalytic loop. The tract at residues 2121–2145 (HIDYNVCFEKGRTLRIPEKVPFRLT) is activation loop. The 33-residue stretch at 3186–3218 (QRSTVAEQVDYVIREACNPENLAVLYEGWTPWV) folds into the FATC domain.

This sequence belongs to the PI3/PI4-kinase family. As to quaternary structure, component of a post-splicing multiprotein NMD complex. Requires Mn(2+) as cofactor.

The protein resides in the cytoplasm. It catalyses the reaction L-seryl-[protein] + ATP = O-phospho-L-seryl-[protein] + ADP + H(+). The enzyme catalyses L-threonyl-[protein] + ATP = O-phospho-L-threonyl-[protein] + ADP + H(+). Functionally, serine/threonine protein kinase involved in mRNA surveillance. Recognizes the substrate consensus sequence [ST]-Q. Involved in nonsense-mediated decay (NMD) of mRNAs containing premature stop codons, probably by phosphorylating Upf1. The sequence is that of Serine/threonine-protein kinase Smg1 (nonC) from Drosophila melanogaster (Fruit fly).